A 590-amino-acid polypeptide reads, in one-letter code: Probable indole-3-acetic acid-amido synthetase GH3.1 (590 aa).

It belongs to the IAA-amido conjugating enzyme family.

Its function is as follows. Catalyzes the synthesis of indole-3-acetic acid (IAA)-amino acid conjugates, providing a mechanism for the plant to cope with the presence of excess auxin. The chain is Probable indole-3-acetic acid-amido synthetase GH3.1 (GH3.1) from Arabidopsis thaliana (Mouse-ear cress).